Consider the following 157-residue polypeptide: MSRRKTIEKRPVTPDPRFNSVLVAKFTNGLMERGKKSLAQRIFYDAMDLVADRMKDEEPLTVFEEAMEKVRPRVEVKSRRVGGATYQVPMEIRQARRNALAIRWIISYAKSRSGKCMSEKLASEVMDAFNNRGAAVKKRDDTHRMAEANKAFAHYRW.

This sequence belongs to the universal ribosomal protein uS7 family. Part of the 30S ribosomal subunit. Contacts proteins S9 and S11.

Its function is as follows. One of the primary rRNA binding proteins, it binds directly to 16S rRNA where it nucleates assembly of the head domain of the 30S subunit. Is located at the subunit interface close to the decoding center, probably blocks exit of the E-site tRNA. The polypeptide is Small ribosomal subunit protein uS7 (Desulfotalea psychrophila (strain LSv54 / DSM 12343)).